Reading from the N-terminus, the 219-residue chain is 2-phospho-L-lactate guanylyltransferase (219 aa).

It belongs to the CofC family. As to quaternary structure, homodimer.

The enzyme catalyses (2S)-2-phospholactate + GTP + H(+) = (2S)-lactyl-2-diphospho-5'-guanosine + diphosphate. It participates in cofactor biosynthesis; coenzyme F420 biosynthesis. Its function is as follows. Guanylyltransferase that catalyzes the activation of (2S)-2-phospholactate (2-PL) as (2S)-lactyl-2-diphospho-5'-guanosine, via the condensation of 2-PL with GTP. It is involved in the biosynthesis of coenzyme F420, a hydride carrier cofactor. The chain is 2-phospho-L-lactate guanylyltransferase from Methanocaldococcus vulcanius (strain ATCC 700851 / DSM 12094 / M7) (Methanococcus vulcanius).